Here is a 465-residue protein sequence, read N- to C-terminus: Fumarate hydratase class II (465 aa).

Substrate-binding positions include 99 to 101 (SGT), R127, 130 to 133 (HPND), 140 to 142 (STN), and T188. Catalysis depends on H189, which acts as the Proton donor/acceptor. S319 is an active-site residue. Residues S320 and 325-327 (KVN) contribute to the substrate site.

Belongs to the class-II fumarase/aspartase family. Fumarase subfamily. In terms of assembly, homotetramer.

It is found in the cytoplasm. It catalyses the reaction (S)-malate = fumarate + H2O. The protein operates within carbohydrate metabolism; tricarboxylic acid cycle; (S)-malate from fumarate: step 1/1. In terms of biological role, involved in the TCA cycle. Catalyzes the stereospecific interconversion of fumarate to L-malate. This Parasynechococcus marenigrum (strain WH8102) protein is Fumarate hydratase class II.